The following is a 380-amino-acid chain: Cytochrome b (380 aa).

Helical transmembrane passes span 34–54 (FGSLLGLCLVSQILTGLFLAM), 78–99 (WLLRNLHANGASFMFICLYMHI), 114–134 (WNIGVMLLVLTMATAFLGYVL), and 179–199 (FFAFHFFLPFMIAGLSVVHLL). Heme b is bound by residues H84 and H98. Heme b contacts are provided by H183 and H197. H202 provides a ligand contact to a ubiquinone. Helical transmembrane passes span 227 to 247 (YKDVVGFVVLLAGLVFIALFS), 289 to 309 (LGGVVALAMSIVVLFFMPFVH), 321 to 341 (LAQVLFWLMVVNVLLLTWLGG), and 348 to 368 (YIFLGQAASVIYFVNILLLIP).

This sequence belongs to the cytochrome b family. The cytochrome bc1 complex contains 3 respiratory subunits (MT-CYB, CYC1 and UQCRFS1), 2 core proteins (UQCRC1 and UQCRC2) and probably 6 low-molecular weight proteins. Requires heme b as cofactor.

It is found in the mitochondrion inner membrane. In terms of biological role, component of the ubiquinol-cytochrome c reductase complex (complex III or cytochrome b-c1 complex) that is part of the mitochondrial respiratory chain. The b-c1 complex mediates electron transfer from ubiquinol to cytochrome c. Contributes to the generation of a proton gradient across the mitochondrial membrane that is then used for ATP synthesis. The sequence is that of Cytochrome b (MT-CYB) from Branchiostoma floridae (Florida lancelet).